Consider the following 131-residue polypeptide: Histone H3-like 4 (131 aa).

Lysine 10 carries the N6,N6,N6-trimethyllysine; alternate modification. Lysine 10 bears the N6,N6-dimethyllysine; alternate mark. Lysine 10 is subject to N6-acetyllysine; alternate. N6-methyllysine; alternate is present on lysine 10. The residue at position 12 (threonine 12) is a Phosphothreonine. The residue at position 15 (lysine 15) is an N6-acetyllysine. Serine 27 is subject to Phosphoserine. N6,N6,N6-trimethyllysine; alternate is present on lysine 32. At lysine 32 the chain carries N6,N6-dimethyllysine; alternate. N6-methyllysine; alternate is present on lysine 32.

The protein belongs to the histone H3 family. The nucleosome is a histone octamer containing two molecules each of H2A, H2B, H3 and H4 assembled in one H3-H4 heterotetramer and two H2A-H2B heterodimers. The octamer wraps approximately 147 bp of DNA. In terms of tissue distribution, expressed in roots, seedlings, leaves buds and open flowers.

It is found in the nucleus. The protein localises to the chromosome. Functionally, core component of nucleosome. Nucleosomes wrap and compact DNA into chromatin, limiting DNA accessibility to the cellular machineries which require DNA as a template. Histones thereby play a central role in transcription regulation, DNA repair, DNA replication and chromosomal stability. DNA accessibility is regulated via a complex set of post-translational modifications of histones, also called histone code, and nucleosome remodeling. This Arabidopsis thaliana (Mouse-ear cress) protein is Histone H3-like 4.